The sequence spans 723 residues: tRNA (guanine(27)-N(2))-dimethyltransferase (723 aa).

Positions 1–10 are enriched in acidic residues; that stretch reads MENMAEEELL. The tract at residues 1–72 is disordered; sequence MENMAEEELL…SLASVPEEAE (72 aa). A Phosphothreonine modification is found at Thr23. Low complexity predominate over residues 32-44; sequence PAADTALDSAPTP. Positions 45-59 are enriched in pro residues; the sequence is DSAPAPALAPAPAPA. Phosphoserine is present on Ser61. The Nucleolar localization signal signature appears at 128–132; sequence HKLRR. The C2H2-type zinc-finger motif lies at 177–199; that stretch reads YHCIICSATITRRTDMLGHVKRH. In terms of domain architecture, Trm1 methyltransferase spans 220 to 679; that stretch reads EVLKETDTDI…ASLTQFKSIL (460 aa). Residues Arg253, Asp300, Asp348, and Ala349 each coordinate S-adenosyl-L-methionine. 4 residues coordinate Zn(2+): Cys479, Cys482, Cys504, and Cys506. Lys576 is covalently cross-linked (Glycyl lysine isopeptide (Lys-Gly) (interchain with G-Cter in SUMO2)). Ser603 is subject to Phosphoserine.

Belongs to the class I-like SAM-binding methyltransferase superfamily. Trm1 family.

The protein localises to the nucleus. It localises to the nucleolus. It catalyses the reaction guanosine(27) in tRNA(Tyr) + 2 S-adenosyl-L-methionine = N(2)-dimethylguanosine(27) in tRNA(Tyr) + 2 S-adenosyl-L-homocysteine + 2 H(+). Specifically dimethylates a single guanine residue at position 27 of tRNA(Tyr) using S-adenosyl-L-methionine as donor of the methyl groups. Dimethylation at position 27 of tRNA(Tyr) is required for efficient translation of tyrosine codons. Also required to maintain 3-(3-amino-3-carboxypropyl)uridine (acp3U) in the D-loop of several cytoplasmic tRNAs. The protein is tRNA (guanine(27)-N(2))-dimethyltransferase of Rattus norvegicus (Rat).